Reading from the N-terminus, the 307-residue chain is Glycerol-3-phosphate dehydrogenase [NAD(P)+] (307 aa).

Positions 14, 34, 35, and 82 each coordinate NADPH. Sn-glycerol 3-phosphate contacts are provided by Lys-82 and Gly-110. Ser-114 provides a ligand contact to NADPH. Sn-glycerol 3-phosphate contacts are provided by Lys-165, Asp-218, Ser-228, Arg-229, and Asn-230. The active-site Proton acceptor is the Lys-165. Residue Arg-229 participates in NADPH binding. Glu-255 provides a ligand contact to NADPH.

This sequence belongs to the NAD-dependent glycerol-3-phosphate dehydrogenase family.

It localises to the cytoplasm. The catalysed reaction is sn-glycerol 3-phosphate + NAD(+) = dihydroxyacetone phosphate + NADH + H(+). It carries out the reaction sn-glycerol 3-phosphate + NADP(+) = dihydroxyacetone phosphate + NADPH + H(+). Its pathway is membrane lipid metabolism; glycerophospholipid metabolism. In terms of biological role, catalyzes the reduction of the glycolytic intermediate dihydroxyacetone phosphate (DHAP) to sn-glycerol 3-phosphate (G3P), the key precursor for phospholipid synthesis. In Trichormus variabilis (strain ATCC 29413 / PCC 7937) (Anabaena variabilis), this protein is Glycerol-3-phosphate dehydrogenase [NAD(P)+].